A 312-amino-acid chain; its full sequence is DNA-directed RNA polymerase subunit alpha (312 aa).

The interval 1 to 226 (MIEFKKPNIT…EHFKAFESAD (226 aa)) is alpha N-terminal domain (alpha-NTD). An alpha C-terminal domain (alpha-CTD) region spans residues 243 to 312 (KEKKLEMTIE…DLGLSLRQED (70 aa)).

The protein belongs to the RNA polymerase alpha chain family. Homodimer. The RNAP catalytic core consists of 2 alpha, 1 beta, 1 beta' and 1 omega subunit. When a sigma factor is associated with the core the holoenzyme is formed, which can initiate transcription.

It catalyses the reaction RNA(n) + a ribonucleoside 5'-triphosphate = RNA(n+1) + diphosphate. In terms of biological role, DNA-dependent RNA polymerase catalyzes the transcription of DNA into RNA using the four ribonucleoside triphosphates as substrates. The protein is DNA-directed RNA polymerase subunit alpha of Lactobacillus delbrueckii subsp. bulgaricus (strain ATCC 11842 / DSM 20081 / BCRC 10696 / JCM 1002 / NBRC 13953 / NCIMB 11778 / NCTC 12712 / WDCM 00102 / Lb 14).